A 413-amino-acid polypeptide reads, in one-letter code: MLQRVRKLSLLRELLESGAAGGLLLMACAVLALFVANSPLAEGYFHALHVPFAGLDLLHWINDGLMAIFFLFVGLEIKREFLDGQLSTWANRALPCIAAAGGVVVPGLIYASLNAGSPETLRGWAIPTATDIAFALGVLSLLGSRVPTSLKIFLATLAIVDDLVAVLIIAVFYTAELNTAALMGAALVTLVLLGFNRLKVKRLAPYLVMGVALWWLVLLSGVHATIAGVVLAMTIPLHASKAAPDDATSPLHRLEHALSPWVAFLVVPIFGFANAGLSFAGMTPSVLAEPVTLGVALGLFFGKQIGVFGAAWLAIRLGVARLPVAASWAQLYGVSLLCGIGFTMSLFIGLLAFRDAALQNEVKVGVLVGSLSSALIGATLLSLTKRRLPAVDPSRDHQADATALDDLGREDAR.

Transmembrane regions (helical) follow at residues 15-35 (LESGAAGGLLLMACAVLALFV), 57-77 (LLHWINDGLMAIFFLFVGLEI), 93-113 (ALPCIAAAGGVVVPGLIYASL), 123-143 (GWAIPTATDIAFALGVLSLLG), 152-172 (IFLATLAIVDDLVAVLIIAVF), 175-195 (AELNTAALMGAALVTLVLLGF), 211-231 (VALWWLVLLSGVHATIAGVVL), 261-281 (WVAFLVVPIFGFANAGLSFAG), 295-315 (VALGLFFGKQIGVFGAAWLAI), 333-353 (GVSLLCGIGFTMSLFIGLLAF), and 364-384 (VGVLVGSLSSALIGATLLSLT).

The protein belongs to the NhaA Na(+)/H(+) (TC 2.A.33) antiporter family.

Its subcellular location is the cell inner membrane. The enzyme catalyses Na(+)(in) + 2 H(+)(out) = Na(+)(out) + 2 H(+)(in). Na(+)/H(+) antiporter that extrudes sodium in exchange for external protons. The sequence is that of Na(+)/H(+) antiporter NhaA from Caulobacter vibrioides (strain ATCC 19089 / CIP 103742 / CB 15) (Caulobacter crescentus).